We begin with the raw amino-acid sequence, 204 residues long: Imidazole glycerol phosphate synthase subunit HisH 1 (204 aa).

Positions 5–204 constitute a Glutamine amidotransferase type-1 domain; the sequence is KVVIIDTGCA…AKLIQNFLEL (200 aa). Cys80 functions as the Nucleophile in the catalytic mechanism. Residues His186 and Glu188 contribute to the active site.

Heterodimer of HisH and HisF.

It is found in the cytoplasm. It catalyses the reaction 5-[(5-phospho-1-deoxy-D-ribulos-1-ylimino)methylamino]-1-(5-phospho-beta-D-ribosyl)imidazole-4-carboxamide + L-glutamine = D-erythro-1-(imidazol-4-yl)glycerol 3-phosphate + 5-amino-1-(5-phospho-beta-D-ribosyl)imidazole-4-carboxamide + L-glutamate + H(+). The enzyme catalyses L-glutamine + H2O = L-glutamate + NH4(+). It participates in amino-acid biosynthesis; L-histidine biosynthesis; L-histidine from 5-phospho-alpha-D-ribose 1-diphosphate: step 5/9. Functionally, IGPS catalyzes the conversion of PRFAR and glutamine to IGP, AICAR and glutamate. The HisH subunit provides the glutamine amidotransferase activity that produces the ammonia necessary to HisF for the synthesis of IGP and AICAR. The polypeptide is Imidazole glycerol phosphate synthase subunit HisH 1 (hisH1) (Vibrio vulnificus (strain YJ016)).